Here is a 106-residue protein sequence, read N- to C-terminus: Urease subunit beta (106 aa).

The protein belongs to the urease beta subunit family. In terms of assembly, heterotrimer of UreA (gamma), UreB (beta) and UreC (alpha) subunits. Three heterotrimers associate to form the active enzyme.

The protein resides in the cytoplasm. It carries out the reaction urea + 2 H2O + H(+) = hydrogencarbonate + 2 NH4(+). The protein operates within nitrogen metabolism; urea degradation; CO(2) and NH(3) from urea (urease route): step 1/1. This is Urease subunit beta from Acinetobacter baumannii (strain ATCC 17978 / DSM 105126 / CIP 53.77 / LMG 1025 / NCDC KC755 / 5377).